A 135-amino-acid polypeptide reads, in one-letter code: Large ribosomal subunit protein eL32 (135 aa).

The segment at 51 to 77 (GRDNKFRLKMKGKPRPPEPGYRSPRKV) is disordered.

It belongs to the eukaryotic ribosomal protein eL32 family.

The polypeptide is Large ribosomal subunit protein eL32 (rpl32e) (Nanoarchaeum equitans (strain Kin4-M)).